The primary structure comprises 319 residues: Probable cystathionine gamma-synthase (319 aa).

The residue at position 197 (K197) is an N6-(pyridoxal phosphate)lysine.

This sequence belongs to the trans-sulfuration enzymes family. In terms of assembly, homotetramer. Requires pyridoxal 5'-phosphate as cofactor.

The protein resides in the cytoplasm. It carries out the reaction O-succinyl-L-homoserine + L-cysteine = L,L-cystathionine + succinate + H(+). Catalyzes the formation of L-cystathionine from O-succinyl-L-homoserine (OSHS) and L-cysteine, via a gamma-replacement reaction. In the absence of thiol, catalyzes gamma-elimination to form 2-oxobutanoate, succinate and ammonia. The sequence is that of Probable cystathionine gamma-synthase (metB) from Herpetosiphon aurantiacus (Herpetosiphon giganteus).